The chain runs to 132 residues: Large ribosomal subunit protein bL19 (132 aa).

It belongs to the bacterial ribosomal protein bL19 family.

Functionally, this protein is located at the 30S-50S ribosomal subunit interface and may play a role in the structure and function of the aminoacyl-tRNA binding site. This chain is Large ribosomal subunit protein bL19, found in Maricaulis maris (strain MCS10) (Caulobacter maris).